Consider the following 289-residue polypeptide: uncharacterized protein (289 aa).

This is an uncharacterized protein from Drosophila melanogaster (Fruit fly).